A 116-amino-acid chain; its full sequence is Protein Wnt-5(III) (116 aa).

A lipid anchor (O-palmitoleoyl serine; by PORCN) is attached at serine 1. A glycan (N-linked (GlcNAc...) asparagine) is linked at asparagine 69. Cysteine 82 and cysteine 97 are disulfide-bonded.

The protein belongs to the Wnt family. Palmitoleoylation is required for efficient binding to frizzled receptors. Depalmitoleoylation leads to Wnt signaling pathway inhibition.

Its subcellular location is the secreted. The protein localises to the extracellular space. It localises to the extracellular matrix. Functionally, ligand for members of the frizzled family of seven transmembrane receptors. Probable developmental protein. May be a signaling molecule which affects the development of discrete regions of tissues. Is likely to signal over only few cell diameters. The polypeptide is Protein Wnt-5(III) (WNT-5(III)) (Eptatretus stoutii (Pacific hagfish)).